The primary structure comprises 310 residues: Aspartate carbamoyltransferase catalytic subunit (310 aa).

Residues Arg-55 and Thr-56 each contribute to the carbamoyl phosphate site. Lys-83 is a binding site for L-aspartate. Carbamoyl phosphate contacts are provided by Arg-105, His-136, and Gln-139. The L-aspartate site is built by Arg-169 and Arg-223. Carbamoyl phosphate contacts are provided by Gly-264 and Pro-265.

It belongs to the aspartate/ornithine carbamoyltransferase superfamily. ATCase family. Heterododecamer (2C3:3R2) of six catalytic PyrB chains organized as two trimers (C3), and six regulatory PyrI chains organized as three dimers (R2).

It carries out the reaction carbamoyl phosphate + L-aspartate = N-carbamoyl-L-aspartate + phosphate + H(+). It functions in the pathway pyrimidine metabolism; UMP biosynthesis via de novo pathway; (S)-dihydroorotate from bicarbonate: step 2/3. Its function is as follows. Catalyzes the condensation of carbamoyl phosphate and aspartate to form carbamoyl aspartate and inorganic phosphate, the committed step in the de novo pyrimidine nucleotide biosynthesis pathway. This is Aspartate carbamoyltransferase catalytic subunit from Saccharopolyspora erythraea (strain ATCC 11635 / DSM 40517 / JCM 4748 / NBRC 13426 / NCIMB 8594 / NRRL 2338).